A 317-amino-acid polypeptide reads, in one-letter code: tRNA pseudouridine synthase B (317 aa).

The active-site Nucleophile is the aspartate 47.

This sequence belongs to the pseudouridine synthase TruB family. Type 1 subfamily.

It carries out the reaction uridine(55) in tRNA = pseudouridine(55) in tRNA. Responsible for synthesis of pseudouridine from uracil-55 in the psi GC loop of transfer RNAs. The polypeptide is tRNA pseudouridine synthase B (Shewanella woodyi (strain ATCC 51908 / MS32)).